The primary structure comprises 226 residues: AA9 family lytic polysaccharide monooxygenase E (226 aa).

An N-terminal signal peptide occupies residues 1–18; it reads MLANGAIVFLAAALGVSG. Residue histidine 19 participates in Cu(2+) binding. Cystine bridges form between cysteine 56–cysteine 174 and cysteine 144–cysteine 226. A glycan (N-linked (GlcNAc...) asparagine) is linked at asparagine 69. Histidine 86 lines the Cu(2+) pocket. Residues histidine 160 and glutamine 169 each coordinate O2. Position 171 (tyrosine 171) interacts with Cu(2+).

Belongs to the polysaccharide monooxygenase AA9 family. The cofactor is Cu(2+).

It localises to the secreted. It catalyses the reaction [(1-&gt;4)-beta-D-glucosyl]n+m + reduced acceptor + O2 = 4-dehydro-beta-D-glucosyl-[(1-&gt;4)-beta-D-glucosyl]n-1 + [(1-&gt;4)-beta-D-glucosyl]m + acceptor + H2O.. In terms of biological role, lytic polysaccharide monooxygenase (LPMO) that depolymerizes crystalline and amorphous polysaccharides via the oxidation of scissile alpha- or beta-(1-4)-glycosidic bonds, yielding C1 and C4 oxidation products. Catalysis by LPMOs requires the reduction of the active-site copper from Cu(II) to Cu(I) by a reducing agent and H(2)O(2) or O(2) as a cosubstrate. Shows endoglucanase activity on tamarind xyloglucan, as well as on beechwood xylan when combined with phosphoric acid swollen cellulose (PASC). Shows no activity on wheat arabinoxylan, konjac glucomannan, acetylated spruce galactoglucomannan, or cellopentaose. This chain is AA9 family lytic polysaccharide monooxygenase E, found in Thermothielavioides terrestris (strain ATCC 38088 / NRRL 8126) (Thielavia terrestris).